The primary structure comprises 471 residues: Pancreatic lipase-related protein 2 (471 aa).

The N-terminal stretch at 1–17 (MLPSWTIGLLLLATVRG) is a signal peptide. Cys-21 and Cys-27 are joined by a disulfide. A glycan (N-linked (GlcNAc...) asparagine) is linked at Asn-71. The tract at residues 93 to 105 (IHGFIDKGEDSWP) is required for galactolipase activity. Residues Cys-109 and Cys-120 are joined by a disulfide bond. Ser-171 serves as the catalytic Nucleophile. The Charge relay system role is filled by Asp-195. Positions 206, 209, 211, and 214 each coordinate Ca(2+). Cys-256 and Cys-280 are disulfide-bonded. The interval 257–279 (QKNTLSTIVDVDGIWEGIEDFAA) is required for galactolipase activity. His-282 serves as the catalytic Charge relay system. 2 disulfides stabilise this stretch: Cys-304–Cys-317 and Cys-320–Cys-325. Asn-355 carries N-linked (GlcNAc...) asparagine glycosylation. The region spanning 359-471 (WRYRVSVTLA…ENILQTLNPC (113 aa)) is the PLAT domain. Residues Cys-455 and Cys-471 are joined by a disulfide bond.

Belongs to the AB hydrolase superfamily. Lipase family.

It localises to the secreted. Its subcellular location is the zymogen granule membrane. It is found in the cell projection. The protein localises to the neuron projection. It catalyses the reaction a triacylglycerol + H2O = a diacylglycerol + a fatty acid + H(+). It carries out the reaction a 1,2-diacyl-3-O-(beta-D-galactosyl)-sn-glycerol + 2 H2O = 3-beta-D-galactosyl-sn-glycerol + 2 a fatty acid + 2 H(+). The catalysed reaction is 1,2,3-tri-(9Z-octadecenoyl)-glycerol + H2O = di-(9Z)-octadecenoylglycerol + (9Z)-octadecenoate + H(+). The enzyme catalyses di-(9Z)-octadecenoylglycerol + H2O = (9Z-octadecenoyl)-glycerol + (9Z)-octadecenoate + H(+). It catalyses the reaction (9Z-octadecenoyl)-glycerol + H2O = glycerol + (9Z)-octadecenoate + H(+). It carries out the reaction 1-(9Z-octadecenoyl)-glycerol + H2O = glycerol + (9Z)-octadecenoate + H(+). The catalysed reaction is 1,2,3-tripropanoylglycerol + H2O = dipropanoylglycerol + propanoate + H(+). The enzyme catalyses 1,2,3-tributanoylglycerol + H2O = dibutanoylglycerol + butanoate + H(+). It catalyses the reaction 1,2,3-trioctanoylglycerol + H2O = dioctanoylglycerol + octanoate + H(+). It carries out the reaction 1,2-didecanoylglycerol + H2O = decanoylglycerol + decanoate + H(+). The catalysed reaction is long chain 1,2-diacyl-3-O-beta-D-galactosyl-sn-glycerol + H2O = long chain acyl-3-O-beta-D-galactosyl-sn-glycerol + a fatty acid + H(+). The enzyme catalyses 1,2-dioctanoyl-3-O-beta-D-galactosyl-sn-glycerol + H2O = octanoyl-3-(beta-D-galactosyl)-sn-glycerol + octanoate + H(+). It catalyses the reaction 1,2-didodecanoyl-3-beta-D-galactosyl-sn-glycerol + H2O = dodecanoyl-3-beta-D-galactosyl-sn-glycerol + dodecanoate + H(+). It carries out the reaction 1-beta-D-galactosyl-2,3-didodecanoyl-sn-glycerol + H2O = 1-beta-D-galactosyl-dodecanoyl-sn-glycerol + dodecanoate + H(+). The catalysed reaction is a 1,2-diacyl-3-O-[alpha-D-galactosyl-(1-&gt;6)-beta-D-galactosyl]-sn-glycerol + H2O = acyl-3-O-[alpha-D-galactosyl-(1-&gt;6)-beta-D-galactosyl]-sn-glycerol + a fatty acid + H(+). The enzyme catalyses long chain 1,2-diacyl-3-O-[alpha-D-galactosyl-(1-&gt;6)-beta-D-galactosyl]-sn-glycerol + H2O = long chain acyl-3-O-[alpha-D-galactosyl-(1-&gt;6)-beta-D-galactosyl]-sn-glycerol + a fatty acid + H(+). It catalyses the reaction 1,2-dioctanoyl-3-O-[alpha-D-galactosyl-(1-&gt;6)-beta-D-galactosyl]-sn-glycerol + H2O = octanoyl-3-O-[alpha-D-galactosyl-(1-&gt;6)-beta-D-galactosyl]-sn-glycerol + octanoate + H(+). It carries out the reaction 1,2-didodecanoyl-3-O-[alpha-D-galactosyl-(1-&gt;6)-beta-D-galactosyl]-sn-glycerol + H2O = dodecanoyl-3-O-[alpha-D-galactosyl-(1-&gt;6)-beta-D-galactosyl]-sn-glycerol + dodecanoate + H(+). The catalysed reaction is a 1,2-diacyl-sn-glycero-3-phosphocholine + H2O = a monoacyl-sn-glycero-3-phosphocholine + a fatty acid + H(+). Its pathway is glycerolipid metabolism; triacylglycerol degradation. It participates in glycolipid metabolism. Its activity is regulated as follows. Up-regulated by CLPS in the presence of increasing concentrations of bile salts. Lipase that primarily hydrolyzes triglycerides and galactosylglycerides. In neonates, may play a major role in pancreatic digestion of dietary fats such as milk fat globules enriched in long-chain triglycerides. Hydrolyzes short-, medium- and long-chain fatty acyls in triglycerides without apparent positional specificity. Can completely deacylate triacylglycerols. When the liver matures and bile salt synthesis increases, likely functions mainly as a galactolipase and monoacylglycerol lipase. Hydrolyzes monogalactosyldiglycerols (MGDG) and digalactosyldiacylglycerols (DGDG) present in a plant-based diet, releasing long-chain polyunsaturated fatty acids. Hydrolyzes medium- and long-chain fatty acyls in galactolipids. May act together with LIPF to hydrolyze partially digested triglycerides. Hydrolyzes long-chain monoglycerides with high efficiency. In cytotoxic T cells, contributes to perforin-dependent cell lysis, but is unlikely to mediate direct cytotoxicity. Also has low phospholipase activity. In neurons, required for the localization of the phospholipid 1-oleoyl-2-palmitoyl-PC (OPPC) to neurite tips through acyl chain remodeling of membrane phospholipids. The resulting OPPC-rich lipid membrane domain recruits the t-SNARE protein STX4 by selectively interacting with the STX4 transmembrane domain and this promotes surface expression of the dopamine transporter SLC6A3/DAT at neurite tips by facilitating fusion of SLC6A3-containing transport vesicles with the plasma membrane. This is Pancreatic lipase-related protein 2 (PNLIPRP2) from Sus scrofa (Pig).